Here is a 639-residue protein sequence, read N- to C-terminus: Chaperone protein HtpG (639 aa).

Residues 1 to 347 are a; substrate-binding; that stretch reads MSQQETHGFQ…SNDLPLNVSR (347 aa). The segment at 348 to 564 is b; the sequence is EILQDNKVTT…EGEMSTQMIK (217 aa). The tract at residues 565–639 is c; the sequence is LMQAAGQDVP…MNQMLLASVK (75 aa).

Belongs to the heat shock protein 90 family. Homodimer.

It localises to the cytoplasm. Functionally, molecular chaperone. Has ATPase activity. The polypeptide is Chaperone protein HtpG (Shewanella halifaxensis (strain HAW-EB4)).